A 105-amino-acid chain; its full sequence is Synaptic plasticity regulator PANTS (105 aa).

It belongs to the UPF0545 family. As to quaternary structure, interacts with RTN4 isoform A/Nogo-A; the interaction results in enhanced RTN4-mediated inhibition of AMPA receptor clustering. Also interacts with NCAM1, RANBP2 and CCT8. Post-translationally, rapidly degraded by proteolysis following neuronal stimulation, resulting in increased AMPA receptor clustering. In the postnatal brain, expressed diffusely throughout the hippocampus at a low level at 8 weeks (at protein level). At 16 weeks, strongly expressed in the stratum lucidum of the hippocampus (at protein level). In developing and aging brain, expression is strongest in hippocampus, especially in areas CA3 and CA2, throughout the dorsoventral axis.

The protein resides in the synapse. It is found in the synaptic cleft. Its function is as follows. Negatively regulates long-term potentiation and modulates adult synaptic plasticity. Stabilizes the interaction of RTN4 isoform A/Nogo-A with its receptors, inhibiting clustering of postsynaptic AMPA receptors at synaptic sites. Upon neuronal stimulation, degraded at synapses, reducing RTN4 signaling and allowing AMPA receptor clustering at individual synapses. In Mus musculus (Mouse), this protein is Synaptic plasticity regulator PANTS.